Reading from the N-terminus, the 375-residue chain is Succinyl-diaminopimelate desuccinylase (375 aa).

Position 66 (histidine 66) interacts with Zn(2+). Aspartate 68 is a catalytic residue. Position 99 (aspartate 99) interacts with Zn(2+). The active-site Proton acceptor is glutamate 133. Residues glutamate 134, glutamate 162, and histidine 348 each coordinate Zn(2+).

The protein belongs to the peptidase M20A family. DapE subfamily. In terms of assembly, homodimer. Zn(2+) serves as cofactor. Requires Co(2+) as cofactor.

The catalysed reaction is N-succinyl-(2S,6S)-2,6-diaminopimelate + H2O = (2S,6S)-2,6-diaminopimelate + succinate. It functions in the pathway amino-acid biosynthesis; L-lysine biosynthesis via DAP pathway; LL-2,6-diaminopimelate from (S)-tetrahydrodipicolinate (succinylase route): step 3/3. Its function is as follows. Catalyzes the hydrolysis of N-succinyl-L,L-diaminopimelic acid (SDAP), forming succinate and LL-2,6-diaminopimelate (DAP), an intermediate involved in the bacterial biosynthesis of lysine and meso-diaminopimelic acid, an essential component of bacterial cell walls. This chain is Succinyl-diaminopimelate desuccinylase, found in Citrobacter koseri (strain ATCC BAA-895 / CDC 4225-83 / SGSC4696).